Reading from the N-terminus, the 994-residue chain is Bifunctional glutamine synthetase adenylyltransferase/adenylyl-removing enzyme (994 aa).

Positions 1–487 (MVVTKLATQR…LHTKLFYQPL (487 aa)) are adenylyl removase. The adenylyl transferase stretch occupies residues 492–994 (GPTGLEIAHG…KAVVRKVFGS (503 aa)).

It belongs to the GlnE family. Mg(2+) is required as a cofactor.

It carries out the reaction [glutamine synthetase]-O(4)-(5'-adenylyl)-L-tyrosine + phosphate = [glutamine synthetase]-L-tyrosine + ADP. It catalyses the reaction [glutamine synthetase]-L-tyrosine + ATP = [glutamine synthetase]-O(4)-(5'-adenylyl)-L-tyrosine + diphosphate. Its function is as follows. Involved in the regulation of glutamine synthetase GlnA, a key enzyme in the process to assimilate ammonia. When cellular nitrogen levels are high, the C-terminal adenylyl transferase (AT) inactivates GlnA by covalent transfer of an adenylyl group from ATP to specific tyrosine residue of GlnA, thus reducing its activity. Conversely, when nitrogen levels are low, the N-terminal adenylyl removase (AR) activates GlnA by removing the adenylyl group by phosphorolysis, increasing its activity. The regulatory region of GlnE binds the signal transduction protein PII (GlnB) which indicates the nitrogen status of the cell. The chain is Bifunctional glutamine synthetase adenylyltransferase/adenylyl-removing enzyme from Mycobacterium tuberculosis (strain CDC 1551 / Oshkosh).